Consider the following 74-residue polypeptide: Translation initiation factor IF-1, chloroplastic (74 aa).

Positions Met1–Arg72 constitute an S1-like domain.

It belongs to the IF-1 family. In terms of assembly, component of the 30S ribosomal translation pre-initiation complex which assembles on the 30S ribosome in the order IF-2 and IF-3, IF-1 and N-formylmethionyl-tRNA(fMet); mRNA recruitment can occur at any time during PIC assembly.

It is found in the plastid. The protein resides in the chloroplast. One of the essential components for the initiation of protein synthesis. Stabilizes the binding of IF-2 and IF-3 on the 30S subunit to which N-formylmethionyl-tRNA(fMet) subsequently binds. Helps modulate mRNA selection, yielding the 30S pre-initiation complex (PIC). Upon addition of the 50S ribosomal subunit IF-1, IF-2 and IF-3 are released leaving the mature 70S translation initiation complex. The chain is Translation initiation factor IF-1, chloroplastic from Chlorokybus atmophyticus (Soil alga).